The following is a 594-amino-acid chain: Beta-fructofuranosidase, insoluble isoenzyme CWINV3 (594 aa).

Positions 1-28 are cleaved as a signal peptide; the sequence is MAKLNRSNIGLSLLLSMFLANFITDLEA. Substrate-binding positions include 50 to 53, Q69, W77, and 113 to 114; these read WMND and WS. D53 is an active-site residue. N147 is a glycosylation site (N-linked (GlcNAc...) asparagine). A substrate-binding site is contributed by 179-180; the sequence is RD. An N-linked (GlcNAc...) asparagine glycan is attached at N217. Substrate is bound at residue E235. N-linked (GlcNAc...) asparagine glycans are attached at residues N297 and N329. Cysteines 428 and 480 form a disulfide.

The protein belongs to the glycosyl hydrolase 32 family. Expressed in seedlings, leaves, flowers, and seeds.

The protein localises to the secreted. Its subcellular location is the extracellular space. It localises to the apoplast. The protein resides in the cell wall. It catalyses the reaction Hydrolysis of terminal, non-reducing (2-&gt;1)- and (2-&gt;6)-linked beta-D-fructofuranose residues in fructans.. Its function is as follows. 6-fructan exohydrolase that can use phlein, levan, neokestose, levanbiose, 6-kestose, and 1-kestose as substrates. The protein is Beta-fructofuranosidase, insoluble isoenzyme CWINV3 (CWINV3) of Arabidopsis thaliana (Mouse-ear cress).